The sequence spans 53 residues: UPF0181 protein VC_A0569 (53 aa).

It belongs to the UPF0181 family.

In Vibrio cholerae serotype O1 (strain ATCC 39315 / El Tor Inaba N16961), this protein is UPF0181 protein VC_A0569.